The sequence spans 323 residues: HPr kinase/phosphorylase (323 aa).

Active-site residues include His-146 and Lys-167. 161-168 contacts ATP; the sequence is GESGLGKS. Ser-168 provides a ligand contact to Mg(2+). The Proton acceptor; for phosphorylation activity. Proton donor; for dephosphorylation activity role is filled by Asp-185. The segment at 209–218 is important for the catalytic mechanism of both phosphorylation and dephosphorylation; that stretch reads LEVRGLGLLD. Residue Glu-210 coordinates Mg(2+). Arg-250 is an active-site residue. Residues 271 to 276 form an important for the catalytic mechanism of dephosphorylation region; the sequence is QVAAGR.

It belongs to the HPrK/P family. In terms of assembly, homohexamer. It depends on Mg(2+) as a cofactor.

It catalyses the reaction [HPr protein]-L-serine + ATP = [HPr protein]-O-phospho-L-serine + ADP + H(+). It carries out the reaction [HPr protein]-O-phospho-L-serine + phosphate + H(+) = [HPr protein]-L-serine + diphosphate. In terms of biological role, catalyzes the ATP- as well as the pyrophosphate-dependent phosphorylation of a specific serine residue in HPr, a phosphocarrier protein of the phosphoenolpyruvate-dependent sugar phosphotransferase system (PTS). HprK/P also catalyzes the pyrophosphate-producing, inorganic phosphate-dependent dephosphorylation (phosphorolysis) of seryl-phosphorylated HPr (P-Ser-HPr). This chain is HPr kinase/phosphorylase, found in Cupriavidus pinatubonensis (strain JMP 134 / LMG 1197) (Cupriavidus necator (strain JMP 134)).